The sequence spans 268 residues: Ribosomal RNA small subunit methyltransferase A (268 aa).

Residues N19, L21, G46, E67, D92, and N113 each coordinate S-adenosyl-L-methionine.

Belongs to the class I-like SAM-binding methyltransferase superfamily. rRNA adenine N(6)-methyltransferase family. RsmA subfamily.

It is found in the cytoplasm. The catalysed reaction is adenosine(1518)/adenosine(1519) in 16S rRNA + 4 S-adenosyl-L-methionine = N(6)-dimethyladenosine(1518)/N(6)-dimethyladenosine(1519) in 16S rRNA + 4 S-adenosyl-L-homocysteine + 4 H(+). Functionally, specifically dimethylates two adjacent adenosines (A1518 and A1519) in the loop of a conserved hairpin near the 3'-end of 16S rRNA in the 30S particle. May play a critical role in biogenesis of 30S subunits. This Tolumonas auensis (strain DSM 9187 / NBRC 110442 / TA 4) protein is Ribosomal RNA small subunit methyltransferase A.